Here is a 558-residue protein sequence, read N- to C-terminus: Protein S10 (558 aa).

Residues 539–558 (SSNTSSHEHTQKIVLNKVTR) are disordered.

This chain is Protein S10 (S10), found in Avena sativa (Oat).